Here is a 385-residue protein sequence, read N- to C-terminus: Mitochondrial protein C2orf69 (385 aa).

The N-terminal 24 residues, 1-24 (MWGFRLLRSPPLLLLLPQLGIGNA), are a transit peptide targeting the mitochondrion.

Belongs to the C2orf69 family.

It is found in the mitochondrion matrix. May play a role in the respiratory chain. This chain is Mitochondrial protein C2orf69 (C2orf69), found in Homo sapiens (Human).